Reading from the N-terminus, the 447-residue chain is MTKKIITLVGRPNVGKSTLFNRLSIRKKAIVHDLPGVTRDRKYTEGKIGSFEFLLIDTPGLEENPDSMGERLIEQTTKAILEADLICFMVDGRSGILPDDKLLGSFVRKYNKPAILIVNKCEKAFDFDKEYYKLGFDSMVAISAEHGTGLIDLYDEIIAKLPEEESIETNIADPIKRDCLQIVVSGRPNAGKSTFINALINDERLLTGPEAGITRESIEIDWQYKNNHIKLIDTAGLRKKSTITESLEKLSASDAINSIKFANTVILMIDALAPLKQQDLNIASHVVNEGRSIVIVVNKWDLVKESEKEAFQEEFYYQINTHLPQVKGVPVLFISAINKQNIEQVLDACLKIYKIWNKKITTSKLNEWLNFTTEAHPLPLQKGGKRVRVKYMTQTKTRPPTFKLFSNNPEKITDSYTRYLVNNMREAFDMPGIPIRFTYVKTKNPYV.

2 consecutive EngA-type G domains span residues Lys4–Glu165 and Leu180–Asn357. GTP is bound by residues Gly10–Ser17, Asp57–Leu61, Asn119–Glu122, Gly186–Ser193, Asp233–Leu237, and Asn298–Asp301. The 86-residue stretch at Lys358–Lys443 folds into the KH-like domain.

It belongs to the TRAFAC class TrmE-Era-EngA-EngB-Septin-like GTPase superfamily. EngA (Der) GTPase family. As to quaternary structure, associates with the 50S ribosomal subunit.

In terms of biological role, GTPase that plays an essential role in the late steps of ribosome biogenesis. The polypeptide is GTPase Der (Rickettsia felis (strain ATCC VR-1525 / URRWXCal2) (Rickettsia azadi)).